The primary structure comprises 900 residues: MQLHILNNPKDAALAADAEFLKQSLFNLLHEEASPLVVETVKLLSTSDDSAALIEKVLPQLDEQQTHDLTLACGLFAQILNIAEDVHHERRRQIHEEAGRGGAEGSLTETVRRLKAGKADGKSVQRQLDNTSVTAVLTAHPTEVQRQTVLNFNRRIRALLPQRERCTNADALARLRREIDTILLGLWQTSETRRHKLSVNDEINNGVSIFPMSFFEALPKLYRKMEHDFQTAYPDVRVPDILKIGGWIGGDRDGNPFVSAETLRFAFRRHADAVFRFYRGELDKLYRELPLSIRRVKVNGDVMALSDKSPDEETARAEEPYRRAIAYIMARAMGKARALGLGMGCKFGFLEPYASAQEFLDDLKKLQHSLIDNGSRLLAEGRLADLIRSVSVFGFHMMPLDLRQHAGKHADVVAELFQHAGLEDYNSLNEEQKQAALLRELSHQRPLYSPFITYSDHTRHELAIFNEARKIKDEFGEDAVTQSIISNCEQPSDLLALALLLKETGLLAVENGKPKSRINIVPLFETIEALENACPVMETMFRLDWYGALLESRGNIQEIMLGYSDSNKDGGYVTSSWCLYQAELGLVELFKKYDVRMRLFHGRGGSVGRGGGPSYQAILAQPAGSVAGQIRITEQGEVITAKYADPGNAQRNLETLVAATLEASILPDKKDPDAKLMQDLSDVSFKYYRELITHPDFIDYFLQTSPIQEIATLNLGSRPASRKTLARIQDLRAIPWVFSWMQNRLMLPAWYGFGSAVETLCEGNPDTLAALREHAQSNPFFQAMLSNMEQVMAKTDITLAENYAGLSESPDKAKVIFGMIKEEYRRSRKALLDLLQTEELLRDNRSLARSLALRIPYLNALNGLQVAMLKRLRKEPDNPHALLMVHLTINGVAQGLRNTG.

Catalysis depends on residues H140 and K568.

The protein belongs to the PEPCase type 1 family. Mg(2+) serves as cofactor.

It carries out the reaction oxaloacetate + phosphate = phosphoenolpyruvate + hydrogencarbonate. Forms oxaloacetate, a four-carbon dicarboxylic acid source for the tricarboxylic acid cycle. The protein is Phosphoenolpyruvate carboxylase of Neisseria meningitidis serogroup A / serotype 4A (strain DSM 15465 / Z2491).